A 1084-amino-acid chain; its full sequence is Cellulose synthase A catalytic subunit 6 [UDP-forming] (1084 aa).

M1 carries the N-acetylmethionine modification. At 1 to 277 the chain is on the cytoplasmic side; the sequence is MNTGGRLIAG…KSSKINPYRM (277 aa). C39, C42, C58, C61, C66, C69, C81, and C84 together coordinate Zn(2+). The RING-type; degenerate zinc finger occupies 39 to 85; the sequence is CQICRDEIELTVDGEPFVACNECAFPVCRPCYEYERREGNQACPQCK. A helical membrane pass occupies residues 278-298; it reads LIVLRLVILGLFFHYRILHPV. Topologically, residues 299 to 300 are extracellular; it reads KD. A helical membrane pass occupies residues 301-321; it reads AYALWLISVICEIWFAVSWVL. At 322–868 the chain is on the cytoplasmic side; the sequence is DQFPKWYPIE…INSVVYPWTS (547 aa). The UDP-alpha-D-glucose site is built by S360, K366, E367, and D396. D396 is a catalytic residue. The stretch at 450–476 forms a coiled coil; the sequence is VRERRAMKRDYEEFKVKINALVATAQK. Position 537 (K537) interacts with UDP-alpha-D-glucose. Mn(2+)-binding residues include K538 and D562. A coiled-coil region spans residues 675 to 703; sequence RKAKTVAADKKKKNREASKQIHALENIEE. D785 is an active-site residue. Residues 869–889 traverse the membrane as a helical segment; the sequence is LPLIVYCSLPAICLLTGKFIV. Topologically, residues 890–894 are extracellular; it reads PEISN. Residues 895–915 traverse the membrane as a helical segment; it reads YASILFMALFSSIAITGILEM. The Cytoplasmic portion of the chain corresponds to 916 to 930; that stretch reads QWGKVGIDDWWRNEQ. Residues 931–951 form a helical membrane-spanning segment; sequence FWVIGGVSAHLFALFQGLLKV. Residues 952-980 lie on the Extracellular side of the membrane; that stretch reads LAGVDTNFTVTSKAADDGEFSDLYLFKWT. N958 carries N-linked (GlcNAc...) asparagine glycosylation. The helical transmembrane segment at 981 to 1001 threads the bilayer; the sequence is SLLIPPMTLLIINVIGVIVGV. The Cytoplasmic portion of the chain corresponds to 1002-1012; that stretch reads SDAISNGYDSW. The helical transmembrane segment at 1013 to 1033 threads the bilayer; the sequence is GPLFGRLFFALWVIIHLYPFL. The Extracellular segment spans residues 1034 to 1042; sequence KGLLGKQDR. Residues 1043–1063 traverse the membrane as a helical segment; that stretch reads MPTIIVVWSILLASILTLLWV. At 1064 to 1084 the chain is on the cytoplasmic side; the sequence is RVNPFVAKGGPILEICGLDCL.

Belongs to the glycosyltransferase 2 family. Plant cellulose synthase subfamily. Interacts with CESA1 and CESA3. Interacts with STL1 and STL2, but not with GOT1. Binds to CSI1 and CSI3. Interacts with PAT24/TIP1. Zn(2+) is required as a cofactor. The cofactor is Mn(2+). In terms of processing, S-acylated. Expressed in germinating seeds, seedlings, roots, stems, leaves and flowers. Not present in mature flowers.

It is found in the cell membrane. The enzyme catalyses [(1-&gt;4)-beta-D-glucosyl](n) + UDP-alpha-D-glucose = [(1-&gt;4)-beta-D-glucosyl](n+1) + UDP + H(+). The protein operates within glycan metabolism; plant cellulose biosynthesis. Its function is as follows. Catalytic subunit of cellulose synthase terminal complexes ('rosettes'), required for beta-1,4-glucan microfibril crystallization, a major mechanism of the cell wall formation. Involved in the primary cell wall formation. The presence of each protein CESA1 and CESA6 is critical for cell expansion. The hypocotyl elongation is based on a CESA6-dependent cell elongation in dark and a CESA6-independent cell elongation in light. The transition between these two mechanisms requires photosynthesis and PHYB, but not CRY1. The CESA6-dependent cell elongation seems to be independent of gibberellic acid, auxin and ethylene. May be involved in sensitivity to isoxaben. Associates with and moves along cortical microtubules for the process of cellulose deposition. The chain is Cellulose synthase A catalytic subunit 6 [UDP-forming] from Arabidopsis thaliana (Mouse-ear cress).